The chain runs to 70 residues: Large ribosomal subunit protein bL31 (70 aa).

Residues cysteine 16, cysteine 18, cysteine 37, and cysteine 40 each coordinate Zn(2+). A disordered region spans residues 48-70 (QRQASSGGRVDKFNKRFGALGSK).

The protein belongs to the bacterial ribosomal protein bL31 family. Type A subfamily. In terms of assembly, part of the 50S ribosomal subunit. Zn(2+) serves as cofactor.

Binds the 23S rRNA. The protein is Large ribosomal subunit protein bL31 of Photobacterium profundum (strain SS9).